A 359-amino-acid chain; its full sequence is Phosphoserine aminotransferase (359 aa).

Arg-42 serves as a coordination point for L-glutamate. Pyridoxal 5'-phosphate contacts are provided by residues 76 to 77 (AS), Trp-102, Thr-152, Asp-171, and Gln-194. Lys-195 bears the N6-(pyridoxal phosphate)lysine mark. 236–237 (NT) provides a ligand contact to pyridoxal 5'-phosphate.

The protein belongs to the class-V pyridoxal-phosphate-dependent aminotransferase family. SerC subfamily. As to quaternary structure, homodimer. It depends on pyridoxal 5'-phosphate as a cofactor.

It is found in the cytoplasm. The enzyme catalyses O-phospho-L-serine + 2-oxoglutarate = 3-phosphooxypyruvate + L-glutamate. It catalyses the reaction 4-(phosphooxy)-L-threonine + 2-oxoglutarate = (R)-3-hydroxy-2-oxo-4-phosphooxybutanoate + L-glutamate. The protein operates within amino-acid biosynthesis; L-serine biosynthesis; L-serine from 3-phospho-D-glycerate: step 2/3. It participates in cofactor biosynthesis; pyridoxine 5'-phosphate biosynthesis; pyridoxine 5'-phosphate from D-erythrose 4-phosphate: step 3/5. Functionally, catalyzes the reversible conversion of 3-phosphohydroxypyruvate to phosphoserine and of 3-hydroxy-2-oxo-4-phosphonooxybutanoate to phosphohydroxythreonine. The chain is Phosphoserine aminotransferase from Ruthia magnifica subsp. Calyptogena magnifica.